A 121-amino-acid chain; its full sequence is Ribonuclease P protein component (121 aa).

The protein belongs to the RnpA family. In terms of assembly, consists of a catalytic RNA component (M1 or rnpB) and a protein subunit.

It catalyses the reaction Endonucleolytic cleavage of RNA, removing 5'-extranucleotides from tRNA precursor.. RNaseP catalyzes the removal of the 5'-leader sequence from pre-tRNA to produce the mature 5'-terminus. It can also cleave other RNA substrates such as 4.5S RNA. The protein component plays an auxiliary but essential role in vivo by binding to the 5'-leader sequence and broadening the substrate specificity of the ribozyme. The sequence is that of Ribonuclease P protein component from Neisseria gonorrhoeae (strain ATCC 700825 / FA 1090).